A 376-amino-acid chain; its full sequence is Glucose-1-phosphate adenylyltransferase (376 aa).

Alpha-D-glucose 1-phosphate contacts are provided by residues Tyr101, Gly166, 181-182, and Ser192; that span reads EK.

This sequence belongs to the bacterial/plant glucose-1-phosphate adenylyltransferase family. In terms of assembly, homotetramer.

The catalysed reaction is alpha-D-glucose 1-phosphate + ATP + H(+) = ADP-alpha-D-glucose + diphosphate. It functions in the pathway glycan biosynthesis; glycogen biosynthesis. In terms of biological role, involved in the biosynthesis of ADP-glucose, a building block required for the elongation reactions to produce glycogen. Catalyzes the reaction between ATP and alpha-D-glucose 1-phosphate (G1P) to produce pyrophosphate and ADP-Glc. The polypeptide is Glucose-1-phosphate adenylyltransferase (Bacillus cereus (strain ATCC 10987 / NRS 248)).